A 149-amino-acid chain; its full sequence is Large ribosomal subunit protein uL15 (149 aa).

A disordered region spans residues 1 to 58 (MKLHNLRPAKGGEVKARKRVGRGYGSGLGHNAGRGRDGQNSRSGGGVRPGFEGGQMPL). Composition is skewed to gly residues over residues 22 to 32 (RGYGSGLGHNA) and 43 to 53 (SGGGVRPGFEG).

Belongs to the universal ribosomal protein uL15 family. Part of the 50S ribosomal subunit.

Its function is as follows. Binds to the 23S rRNA. This Finegoldia magna (strain ATCC 29328 / DSM 20472 / WAL 2508) (Peptostreptococcus magnus) protein is Large ribosomal subunit protein uL15.